Consider the following 103-residue polypeptide: Phorbol-12-myristate-13-acetate-induced protein 1 (103 aa).

2 short sequence motifs (BH3) span residues 27-35 (LRKIGDKVY) and 78-86 (LRRIGDKVN). The tract at residues 90 to 99 (KLLNLISKLF) is required for mitochondrial location.

This sequence belongs to the PMAIP1 family. In terms of assembly, interacts with MCL1. Interacts with BCL2A1. Interacts with BAX. Interacts with BCL2L10. As to expression, detected in thymocytes after irradiation with X-rays. Not detectable in untreated thymocytes (at protein level). Detected in embryonic neural precursor cells of the telencephalon Constitutively expressed at low levels in adult brain, testis, thymus, spleen, lung and kidney.

It localises to the mitochondrion. In terms of biological role, promotes activation of caspases and apoptosis. Promotes mitochondrial membrane changes and efflux of apoptogenic proteins from the mitochondria. Contributes to p53/TP53-dependent apoptosis after radiation exposure. Promotes proteasomal degradation of MCL1. Competes with BIM/BCL2L11 for binding to MCL1 and can displace BIM/BCL2L11 from its binding site on MCL1. Competes with BAK1 for binding to MCL1 and can displace BAK1 from its binding site on MCL1. This chain is Phorbol-12-myristate-13-acetate-induced protein 1 (Pmaip1), found in Mus musculus (Mouse).